Consider the following 118-residue polypeptide: MSEFSPIFIYLVMSLLVSLILLGLPFLFASNSSTYPEKLSAYECGFDPFGDARSRFDIRFYLVSILFIIFDLEVTFFFPWAVSLNKIDLFGFWSMMAFLLILTIGFLYEWKRGALDWE.

Helical transmembrane passes span 7–27 (IFIY…LPFL), 62–82 (LVSI…PWAV), and 87–107 (IDLF…IGFL).

The protein belongs to the complex I subunit 3 family.

The protein localises to the mitochondrion membrane. It catalyses the reaction a ubiquinone + NADH + 5 H(+)(in) = a ubiquinol + NAD(+) + 4 H(+)(out). Core subunit of the mitochondrial membrane respiratory chain NADH dehydrogenase (Complex I) that is believed to belong to the minimal assembly required for catalysis. Complex I functions in the transfer of electrons from NADH to the respiratory chain. The immediate electron acceptor for the enzyme is believed to be ubiquinone. In Allium cepa (Onion), this protein is NADH-ubiquinone oxidoreductase chain 3 (ND3).